The primary structure comprises 82 residues: Small ribosomal subunit protein uS17 (82 aa).

The protein belongs to the universal ribosomal protein uS17 family. In terms of assembly, part of the 30S ribosomal subunit.

One of the primary rRNA binding proteins, it binds specifically to the 5'-end of 16S ribosomal RNA. The chain is Small ribosomal subunit protein uS17 from Nitrobacter winogradskyi (strain ATCC 25391 / DSM 10237 / CIP 104748 / NCIMB 11846 / Nb-255).